A 533-amino-acid chain; its full sequence is tRNA(Ile)-lysidine synthase (533 aa).

27–32 (SGGSDS) lines the ATP pocket.

Belongs to the tRNA(Ile)-lysidine synthase family.

It is found in the cytoplasm. The catalysed reaction is cytidine(34) in tRNA(Ile2) + L-lysine + ATP = lysidine(34) in tRNA(Ile2) + AMP + diphosphate + H(+). Ligates lysine onto the cytidine present at position 34 of the AUA codon-specific tRNA(Ile) that contains the anticodon CAU, in an ATP-dependent manner. Cytidine is converted to lysidine, thus changing the amino acid specificity of the tRNA from methionine to isoleucine. The polypeptide is tRNA(Ile)-lysidine synthase (Rickettsia peacockii (strain Rustic)).